The primary structure comprises 141 residues: ATP synthase epsilon chain (141 aa).

The protein belongs to the ATPase epsilon chain family. F-type ATPases have 2 components, CF(1) - the catalytic core - and CF(0) - the membrane proton channel. CF(1) has five subunits: alpha(3), beta(3), gamma(1), delta(1), epsilon(1). CF(0) has three main subunits: a, b and c.

The protein localises to the cell membrane. Its function is as follows. Produces ATP from ADP in the presence of a proton gradient across the membrane. The polypeptide is ATP synthase epsilon chain (Lactococcus lactis subsp. cremoris (strain SK11)).